A 351-amino-acid polypeptide reads, in one-letter code: Holliday junction branch migration complex subunit RuvB (351 aa).

A large ATPase domain (RuvB-L) region spans residues 4 to 185; sequence HDRELVSPEA…FGFVAHMDFY (182 aa). ATP contacts are provided by residues leucine 24, arginine 25, glycine 66, lysine 69, threonine 70, threonine 71, 132-134, arginine 175, tyrosine 185, and arginine 222; that span reads EDF. Threonine 70 lines the Mg(2+) pocket. Positions 186 to 256 are small ATPAse domain (RuvB-S); it reads SPEELELILH…CARAALSLYE (71 aa). A head domain (RuvB-H) region spans residues 259–351; that stretch reads DEGLDRLDRA…AALFDPDEEP (93 aa). Positions 314 and 319 each coordinate DNA.

This sequence belongs to the RuvB family. As to quaternary structure, homohexamer. Forms an RuvA(8)-RuvB(12)-Holliday junction (HJ) complex. HJ DNA is sandwiched between 2 RuvA tetramers; dsDNA enters through RuvA and exits via RuvB. An RuvB hexamer assembles on each DNA strand where it exits the tetramer. Each RuvB hexamer is contacted by two RuvA subunits (via domain III) on 2 adjacent RuvB subunits; this complex drives branch migration. In the full resolvosome a probable DNA-RuvA(4)-RuvB(12)-RuvC(2) complex forms which resolves the HJ.

It localises to the cytoplasm. The catalysed reaction is ATP + H2O = ADP + phosphate + H(+). The RuvA-RuvB-RuvC complex processes Holliday junction (HJ) DNA during genetic recombination and DNA repair, while the RuvA-RuvB complex plays an important role in the rescue of blocked DNA replication forks via replication fork reversal (RFR). RuvA specifically binds to HJ cruciform DNA, conferring on it an open structure. The RuvB hexamer acts as an ATP-dependent pump, pulling dsDNA into and through the RuvAB complex. RuvB forms 2 homohexamers on either side of HJ DNA bound by 1 or 2 RuvA tetramers; 4 subunits per hexamer contact DNA at a time. Coordinated motions by a converter formed by DNA-disengaged RuvB subunits stimulates ATP hydrolysis and nucleotide exchange. Immobilization of the converter enables RuvB to convert the ATP-contained energy into a lever motion, pulling 2 nucleotides of DNA out of the RuvA tetramer per ATP hydrolyzed, thus driving DNA branch migration. The RuvB motors rotate together with the DNA substrate, which together with the progressing nucleotide cycle form the mechanistic basis for DNA recombination by continuous HJ branch migration. Branch migration allows RuvC to scan DNA until it finds its consensus sequence, where it cleaves and resolves cruciform DNA. The protein is Holliday junction branch migration complex subunit RuvB of Thermobifida fusca (strain YX).